Reading from the N-terminus, the 201-residue chain is Retinol-binding protein 4 (201 aa).

A signal peptide spans 1 to 18 (MKWVWALLLLAALGSGRA). 3 disulfides stabilise this stretch: Cys22/Cys178, Cys88/Cys192, and Cys138/Cys147. Residue Gln116 participates in substrate binding. Arg139 carries the omega-N-methylarginine modification.

This sequence belongs to the calycin superfamily. Lipocalin family. Interacts with TTR. Interaction with TTR prevents its loss by filtration through the kidney glomeruli. Interacts with STRA6. Detected in blood plasma and in urine (at protein level).

It localises to the secreted. Functionally, retinol-binding protein that mediates retinol transport in blood plasma. Delivers retinol from the liver stores to the peripheral tissues. Transfers the bound all-trans retinol to STRA6, that then facilitates retinol transport across the cell membrane. The sequence is that of Retinol-binding protein 4 (RBP4) from Homo sapiens (Human).